Here is a 687-residue protein sequence, read N- to C-terminus: Protein-glutamine gamma-glutamyltransferase 2 (687 aa).

Ala-2 carries the N-acetylalanine modification. Intrachain disulfides connect Cys-230-Cys-370 and Cys-370-Cys-371. Active-site residues include Cys-277, His-335, and Asp-358. Ca(2+) contacts are provided by Asn-398, Asp-400, Glu-437, Glu-447, and Glu-452. An N6-acetyllysine modification is found at Lys-468. GTP is bound at residue Arg-476 to Met-483. Residue Glu-539 participates in Ca(2+) binding. Residue Arg-580–Tyr-583 participates in GTP binding. Gln-633 participates in a covalent cross-link: Isoglutamyl lysine isopeptide (Gln-Lys) (interchain with K-?).

It belongs to the transglutaminase superfamily. Transglutaminase family. In terms of assembly, monomer. Interacts with phospholipase C; promoting alpha-1 adrenergic receptor signaling. Interacts with PLCD1. Ca(2+) is required as a cofactor. Post-translationally, disulfide bond formation inactivates the calcium-dependent acyltransferase activity. Cys-370 can form disulfide bonds with both Cys-230 and Cys-371: formation of a disulfide bond between Cys-230 and Cys-370 facilitates formation of the disulfide between Cys-370 and Cys-371, which promotes inactivation of the acyltransferase activity. May also form interchain disulfids between Cys-230 and Cys-370. Ca(2+) protects against disulfide bond formation and inactivation. In terms of processing, auto-transglutaminated: Forms covalent cross-links mediated by transglutaminase between Gln-633 and the epsilon-amino group of a lysine residue of itself or HMGB1, forming homopolymers and heteropolymers, respectively. S-nitrosylated, leading to inactivation of the acyltransferase activity. Highest levels are detected in the lung. Lower levels are found in the liver, spleen and heart, but not in the brain.

It is found in the cytoplasm. Its subcellular location is the cytosol. The protein resides in the nucleus. The protein localises to the chromosome. It localises to the secreted. It is found in the extracellular space. Its subcellular location is the extracellular matrix. The protein resides in the cell membrane. The protein localises to the mitochondrion. It catalyses the reaction L-glutaminyl-[protein] + L-lysyl-[protein] = [protein]-L-lysyl-N(6)-5-L-glutamyl-[protein] + NH4(+). It carries out the reaction L-glutaminyl-[protein] + serotonin = 5-serotonyl-L-glutamyl-[protein] + NH4(+). The catalysed reaction is L-glutaminyl-[protein] + dopamine = 5-dopaminyl-L-glutamyl-[protein] + NH4(+). The enzyme catalyses L-glutaminyl-[protein] + histamine = 5-histaminyl-L-glutamyl-[protein] + NH4(+). It catalyses the reaction L-glutaminyl-[protein] + (R)-noradrenaline = 5-(R)-noradrenalinyl-L-glutamyl-[protein] + NH4(+). It carries out the reaction L-glutaminyl-[protein] + H2O = L-glutamyl-[protein] + NH4(+). With respect to regulation, acyltransferase activity is regulated by the binding of GTP and Ca(2+): inactivated by GTP, which stabilizes its closed structure, thereby obstructing the accessibility of substrates to the active sites. In contrast, Ca(2+) acts as a cofactor by inducing conformational change to the active open form. In absence of Ca(2+), Mg(2+) may bind Ca(2+)-binding sites, promoting GTP-binding and subsequent inhibition of the acyltransferase activity. Extracellularly reduced and activated by CLIC3. Functionally, calcium-dependent acyltransferase that catalyzes the formation of covalent bonds between peptide-bound glutamine and various primary amines, such as gamma-amino group of peptide-bound lysine, or mono- and polyamines, thereby producing cross-linked or aminated proteins, respectively. Involved in many biological processes, such as bone development, angiogenesis, wound healing, cellular differentiation, chromatin modification and apoptosis. Acts as a protein-glutamine gamma-glutamyltransferase by mediating the cross-linking of proteins, such as ACO2, HSPB6, FN1, HMGB1, RAP1GDS1, SLC25A4/ANT1, SPP1 and WDR54. Under physiological conditions, the protein cross-linking activity is inhibited by GTP; inhibition is relieved by Ca(2+) in response to various stresses. When secreted, catalyzes cross-linking of proteins of the extracellular matrix, such as FN1 and SPP1 resulting in the formation of scaffolds. Plays a key role during apoptosis, both by (1) promoting the cross-linking of cytoskeletal proteins resulting in condensation of the cytoplasm, and by (2) mediating cross-linking proteins of the extracellular matrix, resulting in the irreversible formation of scaffolds that stabilize the integrity of the dying cells before their clearance by phagocytosis, thereby preventing the leakage of harmful intracellular components. In addition to protein cross-linking, can use different monoamine substrates to catalyze a vast array of protein post-translational modifications: mediates aminylation of serotonin, dopamine, noradrenaline or histamine into glutamine residues of target proteins to generate protein serotonylation, dopaminylation, noradrenalinylation or histaminylation, respectively. Mediates protein serotonylation of small GTPases during activation and aggregation of platelets, leading to constitutive activation of these GTPases. Plays a key role in chromatin organization by mediating serotonylation and dopaminylation of histone H3. Catalyzes serotonylation of 'Gln-5' of histone H3 (H3Q5ser) during serotonergic neuron differentiation, thereby facilitating transcription. Acts as a mediator of neurotransmission-independent role of nuclear dopamine in ventral tegmental area (VTA) neurons: catalyzes dopaminylation of 'Gln-5' of histone H3 (H3Q5dop), thereby regulating relapse-related transcriptional plasticity in the reward system. Regulates vein remodeling by mediating serotonylation and subsequent inactivation of ATP2A2/SERCA2. Also acts as a protein deamidase by mediating the side chain deamidation of specific glutamine residues of proteins to glutamate. Catalyzes specific deamidation of protein gliadin, a component of wheat gluten in the diet. May also act as an isopeptidase cleaving the previously formed cross-links. Also able to participate in signaling pathways independently of its acyltransferase activity: acts as a signal transducer in alpha-1 adrenergic receptor-mediated stimulation of phospholipase C-delta (PLCD) activity and is required for coupling alpha-1 adrenergic agonists to the stimulation of phosphoinositide lipid metabolism. The chain is Protein-glutamine gamma-glutamyltransferase 2 from Bos taurus (Bovine).